The chain runs to 456 residues: Putative sodium-coupled neutral amino acid transporter 11 (456 aa).

The tract at residues 1–25 (MRAGPRRQHLLPPQDNRAAVGYQRQ) is disordered. Residues 58-78 (FNVVNSIIGSGIIDFSLILLI) form a helical membrane-spanning segment. N94 is a glycosylation site (N-linked (GlcNAc...) asparagine). A run of 6 helical transmembrane segments spans residues 98–118 (GFPG…IAMI), 143–163 (VFIG…LPLS), 171–191 (LGKV…IVMA), 206–226 (AWVF…FAFI), 252–272 (MSIV…YLTF), and 291–313 (VTFG…CFVT). Residue N325 is glycosylated (N-linked (GlcNAc...) asparagine). Transmembrane regions (helical) follow at residues 329–349 (VFHI…SLLI), 351–371 (CLGI…IFII), and 390–410 (IMSY…FVMA).

The protein belongs to the amino acid/polyamine transporter 2 family.

It is found in the membrane. In terms of biological role, putative sodium-dependent amino acid/proton antiporter. In Macaca fascicularis (Crab-eating macaque), this protein is Putative sodium-coupled neutral amino acid transporter 11 (SLC38A11).